A 476-amino-acid polypeptide reads, in one-letter code: Bifunctional protein HldE (476 aa).

Residues 1–319 are ribokinase; it reads MKVSLPAFEK…EALALHHGES (319 aa). 195-198 contacts ATP; it reads NMSE. Aspartate 264 is a catalytic residue. The segment at 345-476 is cytidylyltransferase; that stretch reads MTNGCFDILH…AIIQNIMANQ (132 aa).

The protein in the N-terminal section; belongs to the carbohydrate kinase PfkB family. This sequence in the C-terminal section; belongs to the cytidylyltransferase family. Homodimer.

It catalyses the reaction D-glycero-beta-D-manno-heptose 7-phosphate + ATP = D-glycero-beta-D-manno-heptose 1,7-bisphosphate + ADP + H(+). The enzyme catalyses D-glycero-beta-D-manno-heptose 1-phosphate + ATP + H(+) = ADP-D-glycero-beta-D-manno-heptose + diphosphate. It participates in nucleotide-sugar biosynthesis; ADP-L-glycero-beta-D-manno-heptose biosynthesis; ADP-L-glycero-beta-D-manno-heptose from D-glycero-beta-D-manno-heptose 7-phosphate: step 1/4. It functions in the pathway nucleotide-sugar biosynthesis; ADP-L-glycero-beta-D-manno-heptose biosynthesis; ADP-L-glycero-beta-D-manno-heptose from D-glycero-beta-D-manno-heptose 7-phosphate: step 3/4. Functionally, catalyzes the phosphorylation of D-glycero-D-manno-heptose 7-phosphate at the C-1 position to selectively form D-glycero-beta-D-manno-heptose-1,7-bisphosphate. Catalyzes the ADP transfer from ATP to D-glycero-beta-D-manno-heptose 1-phosphate, yielding ADP-D-glycero-beta-D-manno-heptose. The protein is Bifunctional protein HldE of Shewanella sp. (strain W3-18-1).